Reading from the N-terminus, the 558-residue chain is Arginine--tRNA ligase (558 aa).

The 'HIGH' region signature appears at 129-139 (ANPTGPLHVGH).

Belongs to the class-I aminoacyl-tRNA synthetase family. Monomer.

It is found in the cytoplasm. The enzyme catalyses tRNA(Arg) + L-arginine + ATP = L-arginyl-tRNA(Arg) + AMP + diphosphate. The chain is Arginine--tRNA ligase from Polaromonas naphthalenivorans (strain CJ2).